A 458-amino-acid polypeptide reads, in one-letter code: Phosphoglucosamine mutase (458 aa).

The Phosphoserine intermediate role is filled by serine 106. Mg(2+) is bound by residues serine 106, aspartate 247, aspartate 249, and aspartate 251. Serine 106 is subject to Phosphoserine.

The protein belongs to the phosphohexose mutase family. Requires Mg(2+) as cofactor. Activated by phosphorylation.

The catalysed reaction is alpha-D-glucosamine 1-phosphate = D-glucosamine 6-phosphate. Catalyzes the conversion of glucosamine-6-phosphate to glucosamine-1-phosphate. The protein is Phosphoglucosamine mutase of Chlamydia felis (strain Fe/C-56) (Chlamydophila felis).